Consider the following 307-residue polypeptide: MmsAB operon regulatory protein (307 aa).

In terms of domain architecture, HTH araC/xylS-type spans 201-299; the sequence is DGLHAYMREH…GLSPSAYRQR (99 aa). 2 consecutive DNA-binding regions (H-T-H motif) follow at residues 218 to 239 and 266 to 289; these read ERLAAFCNLSKFHFVSRYKAIT and VARVGQAVGYDDSYYFSRLFSKVM.

Its function is as follows. Regulatory protein for the mmsAB operon. Activates the transcription of the mmsAB genes. This is MmsAB operon regulatory protein from Pseudomonas aeruginosa (strain ATCC 15692 / DSM 22644 / CIP 104116 / JCM 14847 / LMG 12228 / 1C / PRS 101 / PAO1).